Here is a 590-residue protein sequence, read N- to C-terminus: Aspartate--tRNA(Asp/Asn) ligase (590 aa).

Glu-172 contacts L-aspartate. The interval 196 to 199 (QLFK) is aspartate. Residue Arg-218 coordinates L-aspartate. Residues 218–220 (RDE) and Gln-227 contribute to the ATP site. Position 449 (His-449) interacts with L-aspartate. Glu-484 provides a ligand contact to ATP. Arg-491 is an L-aspartate binding site. 536-539 (GVDR) contributes to the ATP binding site.

This sequence belongs to the class-II aminoacyl-tRNA synthetase family. Type 1 subfamily. As to quaternary structure, homodimer.

Its subcellular location is the cytoplasm. It catalyses the reaction tRNA(Asx) + L-aspartate + ATP = L-aspartyl-tRNA(Asx) + AMP + diphosphate. Aspartyl-tRNA synthetase with relaxed tRNA specificity since it is able to aspartylate not only its cognate tRNA(Asp) but also tRNA(Asn). Reaction proceeds in two steps: L-aspartate is first activated by ATP to form Asp-AMP and then transferred to the acceptor end of tRNA(Asp/Asn). The chain is Aspartate--tRNA(Asp/Asn) ligase from Francisella tularensis subsp. holarctica (strain FTNF002-00 / FTA).